The chain runs to 73 residues: Alpha-amylase inhibitor Paim-1 (73 aa).

2 disulfide bridges follow: cysteine 8–cysteine 24 and cysteine 42–cysteine 70.

Its function is as follows. Inhibits mammalian alpha-amylases specifically but has no action on plant and microbial alpha-amylases. This Streptomyces olivaceoviridis (Streptomyces corchorusii) protein is Alpha-amylase inhibitor Paim-1.